The primary structure comprises 2245 residues: Myosin-J heavy chain (2245 aa).

The Myosin N-terminal SH3-like domain occupies 25–77 (QEGAGVWIPDQELGWIGADVIEHSETSADQVLVRTEDDREVKIPLSKVFQKNP). The region spanning 81 to 821 (EGVDDLSFLS…QLASLEDMRL (741 aa)) is the Myosin motor domain. 174–181 (GESGAGKT) provides a ligand contact to ATP. The disordered stretch occupies residues 646–672 (FTQSPGGHPQGNGGPTSSNTKGTSGSS). The span at 660-672 (PTSSNTKGTSGSS) shows a compositional bias: low complexity. The tract at residues 669–749 (SGSSSMKFLS…GFPTRRLLSE (81 aa)) is actin-binding. 3 IQ domains span residues 824 to 851 (LDRS…RDAS), 872 to 901 (RTHS…ASLQ), and 943 to 972 (KLRG…EARS). A coiled-coil region spans residues 973-1812 (LRTVQEQKNK…NYHMLEDRME (840 aa)). Positions 1504–1524 (KKQLTQLQQQHEQSSTQLLLA) are disordered. The segment covering 1506 to 1523 (QLTQLQQQHEQSSTQLLL) has biased composition (low complexity). The 220-residue stretch at 1969–2188 (IDFIDQLQQS…IASICPPNKS (220 aa)) folds into the Dilute domain.

It belongs to the TRAFAC class myosin-kinesin ATPase superfamily. Myosin family. As to quaternary structure, homodimer that associates with six light chains.

It is found in the contractile vacuole. In terms of biological role, processive motor protein that can move over long distances along F-actin without disassociating; processiveness depends on high physiological Mg(2+) concentrations. Presents a high actin affinity in the presence of ADP, fast ATP hydrolysis, and a high steady-state ATPase activity in the presence of actin that is rate limited by ADP release. Physiological decrease of free Mg(2+) ions leads to an increased rate of ADP release and shortening of the fraction of time it spends in the strong acting binding states. The chain is Myosin-J heavy chain (myoJ) from Dictyostelium discoideum (Social amoeba).